A 142-amino-acid polypeptide reads, in one-letter code: Large ribosomal subunit protein uL13 (142 aa).

It belongs to the universal ribosomal protein uL13 family. Part of the 50S ribosomal subunit.

This protein is one of the early assembly proteins of the 50S ribosomal subunit, although it is not seen to bind rRNA by itself. It is important during the early stages of 50S assembly. The sequence is that of Large ribosomal subunit protein uL13 from Pseudoalteromonas translucida (strain TAC 125).